We begin with the raw amino-acid sequence, 135 residues long: ATP synthase epsilon chain (135 aa).

Belongs to the ATPase epsilon chain family. F-type ATPases have 2 components, CF(1) - the catalytic core - and CF(0) - the membrane proton channel. CF(1) has five subunits: alpha(3), beta(3), gamma(1), delta(1), epsilon(1). CF(0) has three main subunits: a, b and c.

It is found in the cellular thylakoid membrane. In terms of biological role, produces ATP from ADP in the presence of a proton gradient across the membrane. The protein is ATP synthase epsilon chain of Prochlorococcus marinus (strain NATL1A).